The following is a 338-amino-acid chain: Anthranilate phosphoribosyltransferase (338 aa).

5-phospho-alpha-D-ribose 1-diphosphate contacts are provided by residues Gly81, 84-85, Thr89, 91-94, 109-117, and Ala121; these read GD, NIST, and KHGNRNLSS. Residue Gly81 coordinates anthranilate. Ser93 contributes to the Mg(2+) binding site. Asn112 is an anthranilate binding site. Residue Arg167 participates in anthranilate binding. Asp226 and Glu227 together coordinate Mg(2+).

Belongs to the anthranilate phosphoribosyltransferase family. Homodimer. Mg(2+) is required as a cofactor.

It carries out the reaction N-(5-phospho-beta-D-ribosyl)anthranilate + diphosphate = 5-phospho-alpha-D-ribose 1-diphosphate + anthranilate. It participates in amino-acid biosynthesis; L-tryptophan biosynthesis; L-tryptophan from chorismate: step 2/5. Functionally, catalyzes the transfer of the phosphoribosyl group of 5-phosphorylribose-1-pyrophosphate (PRPP) to anthranilate to yield N-(5'-phosphoribosyl)-anthranilate (PRA). This chain is Anthranilate phosphoribosyltransferase, found in Cereibacter sphaeroides (strain KD131 / KCTC 12085) (Rhodobacter sphaeroides).